Reading from the N-terminus, the 467-residue chain is Inactive pancreatic lipase-related protein 1 (467 aa).

A signal peptide spans 1-17; it reads MVSIWTIALFLLGAAKA. Intrachain disulfides connect cysteine 21-cysteine 27 and cysteine 109-cysteine 120. Asparagine 157 carries N-linked (GlcNAc...) asparagine glycosylation. Serine 171 acts as the Nucleophile in catalysis. The Charge relay system role is filled by aspartate 194. Glutamate 205, arginine 208, aspartate 210, and aspartate 213 together coordinate Ca(2+). Cysteines 255 and 279 form a disulfide. Residue histidine 281 is the Charge relay system of the active site. 3 cysteine pairs are disulfide-bonded: cysteine 303/cysteine 314, cysteine 317/cysteine 322, and cysteine 451/cysteine 467. Residues 356–467 form the PLAT domain; it reads WRYGVSITLS…EDVLLTLTPC (112 aa).

It belongs to the AB hydrolase superfamily. Lipase family. As to expression, detected in pancreas (at protein level).

Its subcellular location is the secreted. Its function is as follows. May function as inhibitor of dietary triglyceride digestion. Lacks detectable lipase activity towards triglycerides, diglycerides, phosphatidylcholine, galactolipids or cholesterol esters (in vitro). This chain is Inactive pancreatic lipase-related protein 1 (PNLIPRP1), found in Canis lupus familiaris (Dog).